The chain runs to 90 residues: Sec-independent protein translocase protein TatA (90 aa).

Residues 1–21 traverse the membrane as a helical segment; it reads MGSMSIWHWVIVAVIVMLLFG. The disordered stretch occupies residues 44-90; the sequence is AEDETPPAVQAAPPPAEPVRTIPHATETSPGTAIPASHLPGGERKPV.

The protein belongs to the TatA/E family. The Tat system comprises two distinct complexes: a TatABC complex, containing multiple copies of TatA, TatB and TatC subunits, and a separate TatA complex, containing only TatA subunits. Substrates initially bind to the TatABC complex, which probably triggers association of the separate TatA complex to form the active translocon.

The protein resides in the cell inner membrane. In terms of biological role, part of the twin-arginine translocation (Tat) system that transports large folded proteins containing a characteristic twin-arginine motif in their signal peptide across membranes. TatA could form the protein-conducting channel of the Tat system. This is Sec-independent protein translocase protein TatA from Methylobacterium radiotolerans (strain ATCC 27329 / DSM 1819 / JCM 2831 / NBRC 15690 / NCIMB 10815 / 0-1).